A 225-amino-acid polypeptide reads, in one-letter code: Enolase-phosphatase E1 (225 aa).

The protein belongs to the HAD-like hydrolase superfamily. MasA/MtnC family. In terms of assembly, monomer. Requires Mg(2+) as cofactor.

It carries out the reaction 5-methylsulfanyl-2,3-dioxopentyl phosphate + H2O = 1,2-dihydroxy-5-(methylsulfanyl)pent-1-en-3-one + phosphate. The protein operates within amino-acid biosynthesis; L-methionine biosynthesis via salvage pathway; L-methionine from S-methyl-5-thio-alpha-D-ribose 1-phosphate: step 3/6. It participates in amino-acid biosynthesis; L-methionine biosynthesis via salvage pathway; L-methionine from S-methyl-5-thio-alpha-D-ribose 1-phosphate: step 4/6. Bifunctional enzyme that catalyzes the enolization of 2,3-diketo-5-methylthiopentyl-1-phosphate (DK-MTP-1-P) into the intermediate 2-hydroxy-3-keto-5-methylthiopentenyl-1-phosphate (HK-MTPenyl-1-P), which is then dephosphorylated to form the acireductone 1,2-dihydroxy-3-keto-5-methylthiopentene (DHK-MTPene). This chain is Enolase-phosphatase E1, found in Shewanella woodyi (strain ATCC 51908 / MS32).